The chain runs to 205 residues: Small ribosomal subunit protein uS4c (205 aa).

The segment at 22–42 (TSKISKKTNTPGEHGQPQNKL) is disordered. Positions 28–42 (KTNTPGEHGQPQNKL) are enriched in polar residues. The S4 RNA-binding domain maps to 94-157 (MRLDNIVYRL…ASRDLVKKFV (64 aa)).

It belongs to the universal ribosomal protein uS4 family. Part of the 30S ribosomal subunit. Contacts protein S5. The interaction surface between S4 and S5 is involved in control of translational fidelity.

The protein resides in the plastid. Its subcellular location is the chloroplast. Functionally, one of the primary rRNA binding proteins, it binds directly to 16S rRNA where it nucleates assembly of the body of the 30S subunit. In terms of biological role, with S5 and S12 plays an important role in translational accuracy. The chain is Small ribosomal subunit protein uS4c (rps4) from Tupiella akineta (Green alga).